The following is a 102-amino-acid chain: U7-agatoxin-Ao1a (102 aa).

The signal sequence occupies residues 1 to 19 (MTQAFFFLLLVSLVASTLS). The propeptide occupies 20–39 (KEFNFCPRAIDEVCPVKEKR). Tryptophan amide is present on W101.

This sequence belongs to the venom protein 11 family. 02 (wap-2) subfamily. Post-translationally, contains 5 disulfide bonds. In terms of tissue distribution, expressed by the venom gland.

It is found in the secreted. This is U7-agatoxin-Ao1a from Agelena orientalis (Funnel-web spider).